The chain runs to 380 residues: MNPPVEANIRKTALNATHRQSGAKMVDYSGWDMPVEYPSVGGLMKEHLAVRAGVGLFDVSHMGDIRVHGPEALKAVQYLTMNDASKLNTGQAQYSAMLYPNGTFVDDVIVHKFADDDYLLVINAGTREKDVNWVKDNTRQFKVTVEDLSDQFTQIAIQGPKGVDTLQKLTDVDLSKVKFYWFTRGTVAGLKNVLIARTGYTAEDGFEIYIPSDAATSDRVWNELLQAGKEFGVVPAGLGSRNTLRLEGKLPLYGHEISDEINVWEAGLDRFLKMDKGDFIGRAALEKAKNDGVKRALVGLETIERGIPRDGYKVLDLEGKEIGYVTSGSYMPFLKRNLALAYVPVEQSALDNIVAVEIRNQPVKAKVVPSQFYKRPKKSS.

It belongs to the GcvT family. As to quaternary structure, the glycine cleavage system is composed of four proteins: P, T, L and H.

The enzyme catalyses N(6)-[(R)-S(8)-aminomethyldihydrolipoyl]-L-lysyl-[protein] + (6S)-5,6,7,8-tetrahydrofolate = N(6)-[(R)-dihydrolipoyl]-L-lysyl-[protein] + (6R)-5,10-methylene-5,6,7,8-tetrahydrofolate + NH4(+). Its function is as follows. The glycine cleavage system catalyzes the degradation of glycine. In Koribacter versatilis (strain Ellin345), this protein is Aminomethyltransferase.